We begin with the raw amino-acid sequence, 266 residues long: 3-methyl-2-oxobutanoate hydroxymethyltransferase (266 aa).

Mg(2+)-binding residues include aspartate 46 and aspartate 85. 3-methyl-2-oxobutanoate-binding positions include 46–47, aspartate 85, and lysine 115; that span reads DS. Residue glutamate 117 participates in Mg(2+) binding. Glutamate 183 serves as the catalytic Proton acceptor.

The protein belongs to the PanB family. As to quaternary structure, homodecamer; pentamer of dimers. Requires Mg(2+) as cofactor.

The protein localises to the cytoplasm. It carries out the reaction 3-methyl-2-oxobutanoate + (6R)-5,10-methylene-5,6,7,8-tetrahydrofolate + H2O = 2-dehydropantoate + (6S)-5,6,7,8-tetrahydrofolate. Its pathway is cofactor biosynthesis; (R)-pantothenate biosynthesis; (R)-pantoate from 3-methyl-2-oxobutanoate: step 1/2. Its function is as follows. Catalyzes the reversible reaction in which hydroxymethyl group from 5,10-methylenetetrahydrofolate is transferred onto alpha-ketoisovalerate to form ketopantoate. The chain is 3-methyl-2-oxobutanoate hydroxymethyltransferase from Trichlorobacter lovleyi (strain ATCC BAA-1151 / DSM 17278 / SZ) (Geobacter lovleyi).